Consider the following 1218-residue polypeptide: Protein jagged-1 (1218 aa).

A signal peptide spans 1-33; sequence MRSPRTRGRSGRPLSLLLALLCALRAKVCGASG. Topologically, residues 34 to 1067 are extracellular; that stretch reads QFELEILSMQ…QRRPLKNRTD (1034 aa). The N-linked (GlcNAc...) asparagine glycan is linked to asparagine 143. The region spanning 185–229 is the DSL domain; the sequence is VTCDDYYYGFGCNKFCRPRDDFFGHYACDQNGNKTCMEGWMGPEC. 2 disulfides stabilise this stretch: cysteine 187–cysteine 196 and cysteine 200–cysteine 212. The segment at 199–207 is important for interaction with NOTCH1; sequence FCRPRDDFF. A glycan (N-linked (GlcNAc...) asparagine) is linked at asparagine 217. 40 cysteine pairs are disulfide-bonded: cysteine 220-cysteine 229, cysteine 234-cysteine 245, cysteine 238-cysteine 251, cysteine 253-cysteine 262, cysteine 265-cysteine 276, cysteine 271-cysteine 282, cysteine 284-cysteine 293, cysteine 300-cysteine 312, cysteine 306-cysteine 322, cysteine 324-cysteine 333, cysteine 340-cysteine 351, cysteine 345-cysteine 360, cysteine 362-cysteine 371, cysteine 378-cysteine 389, cysteine 383-cysteine 398, cysteine 400-cysteine 409, cysteine 416-cysteine 427, cysteine 421-cysteine 436, cysteine 438-cysteine 447, cysteine 454-cysteine 464, cysteine 458-cysteine 473, cysteine 475-cysteine 484, cysteine 491-cysteine 502, cysteine 496-cysteine 511, cysteine 513-cysteine 522, cysteine 529-cysteine 540, cysteine 534-cysteine 549, cysteine 551-cysteine 560, cysteine 578-cysteine 605, cysteine 599-cysteine 615, cysteine 617-cysteine 626, cysteine 633-cysteine 644, cysteine 638-cysteine 653, cysteine 655-cysteine 664, cysteine 671-cysteine 682, cysteine 676-cysteine 691, cysteine 693-cysteine 702, cysteine 709-cysteine 720, cysteine 714-cysteine 729, and cysteine 731-cysteine 740. One can recognise an EGF-like 1 domain in the interval 230 to 263; the sequence is NRAICRQGCSPKHGSCKLPGDCRCQYGWQGLYCD. In terms of domain architecture, EGF-like 2; atypical spans 264–294; it reads KCIPHPGCVHGICNEPWQCLCETNWGGQLCD. EGF-like domains follow at residues 296–334 and 336–372; these read DLNY…PNCE and AEHA…PTCS. One can recognise an EGF-like 5; calcium-binding domain in the interval 374 to 410; the sequence is NIDDCSPNNCSHGGTCQDLVNGFKCVCPPQWTGKTCQ. Asparagine 382 is a glycosylation site (N-linked (GlcNAc...) asparagine). Residues 412–448 enclose the EGF-like 6; calcium-binding domain; the sequence is DANECEAKPCVNAKSCKNLIASYYCDCLPGWMGQNCD. Residues 450–485 form the EGF-like 7; calcium-binding domain; the sequence is NINDCLGQCQNDASCRDLVNGYRCICPPGYAGDHCE. An EGF-like 8; calcium-binding domain is found at 487 to 523; sequence DIDECASNPCLNGGHCQNEINRFQCLCPTGFSGNLCQ. 2 EGF-like domains span residues 525-561 and 586-627; these read DIDY…KNCS and DTPE…TYCH. N-linked (GlcNAc...) asparagine glycosylation occurs at asparagine 559. Residues 629 to 665 form the EGF-like 11; calcium-binding domain; sequence NINDCESNPCRNGGTCIDGVNSYKCICSDGWEGAYCE. The 37-residue stretch at 667 to 703 folds into the EGF-like 12; calcium-binding domain; sequence NINDCSQNPCHNGGTCRDLVNDFYCDCKNGWKGKTCH. EGF-like domains are found at residues 705–741 and 744–780; these read RDSQ…TTCN and RNSS…PICA. A glycan (N-linked (GlcNAc...) asparagine) is linked at asparagine 745. 9 disulfide bridges follow: cysteine 748–cysteine 759, cysteine 753–cysteine 768, cysteine 770–cysteine 779, cysteine 786–cysteine 797, cysteine 791–cysteine 806, cysteine 808–cysteine 817, cysteine 824–cysteine 835, cysteine 829–cysteine 844, and cysteine 846–cysteine 855. An EGF-like 15; calcium-binding domain is found at 782 to 818; it reads NTNDCSPHPCYNSGTCVDGDNWYRCECAPGFAGPDCR. Residues 820-856 enclose the EGF-like 16; calcium-binding domain; it reads NINECQSSPCAFGATCVDEINGYRCVCPPGHSGAKCQ. Residues asparagine 960, asparagine 991, asparagine 1045, and asparagine 1064 are each glycosylated (N-linked (GlcNAc...) asparagine). The helical transmembrane segment at 1068–1093 threads the bilayer; it reads FLVPLLSSVLTVAWICCLVTAFYWCL. Residues 1094–1218 lie on the Cytoplasmic side of the membrane; it reads RKRRKPGSHT…QSLNRMEYIV (125 aa). The tract at residues 1152–1218 is disordered; the sequence is HNSEVEEDDM…QSLNRMEYIV (67 aa). Positions 1189–1199 are enriched in polar residues; sequence TPTKHPNWTNK.

As to quaternary structure, interacts with NOTCH2 and NOTCH3. Interacts with NOTCH1 (in the presence of calcium ions). In terms of tissue distribution, widely expressed in adult and fetal tissues. In cervix epithelium expressed in undifferentiated subcolumnar reserve cells and squamous metaplasia. Expression is up-regulated in cervical squamous cell carcinoma. Expressed in bone marrow cell line HS-27a which supports the long-term maintenance of immature progenitor cells.

The protein resides in the membrane. Its subcellular location is the cell membrane. Functionally, ligand for multiple Notch receptors and involved in the mediation of Notch signaling. May be involved in cell-fate decisions during hematopoiesis. Seems to be involved in early and late stages of mammalian cardiovascular development. Inhibits myoblast differentiation. Enhances fibroblast growth factor-induced angiogenesis (in vitro). The polypeptide is Protein jagged-1 (JAG1) (Homo sapiens (Human)).